Here is a 190-residue protein sequence, read N- to C-terminus: Cytoglobin (190 aa).

The tract at residues 1-21 (MEKVPGDMEIERRERSEELSE) is disordered. The region spanning 18-167 (ELSEAERKAV…IYSHVTAAYK (150 aa)) is the Globin domain. Cysteine 38 and cysteine 83 form a disulfide bridge. Residues histidine 81 and histidine 113 each coordinate heme b.

The protein belongs to the globin family. Monomeric. Homodimer; disulfide-linked in vitro. Also homooligomeric in vitro. In terms of processing, the formation of an intramolecular disulfide bond between cysteines Cys-38 and Cys-83 specifically enhances the nitrite reductase activity. In terms of tissue distribution, expressed in brain and retina by non-neuronal cells (at protein level). This is the major globin expressed in vascular smooth muscle and is not present in the endothelium (at protein level).

Its subcellular location is the cytoplasm. The protein resides in the nucleus. It catalyses the reaction Fe(II)-heme b-[protein] + nitric oxide + O2 = Fe(III)-heme b-[protein] + nitrate. The enzyme catalyses 2 superoxide + 2 H(+) = H2O2 + O2. It carries out the reaction Fe(III)-heme b-[protein] + nitric oxide + H2O = Fe(II)-heme b-[protein] + nitrite + 2 H(+). The catalysed reaction is H2O2 + AH2 = A + 2 H2O. The nitric oxide dioxygenase activity is activated by a reducing system composed of cytochrome b5, its upstream reductase CYB5R3 and NADH. Its function is as follows. Probable multifunctional globin with a hexacoordinated heme iron required for the catalysis of various reactions depending on redox condition of the cell as well as oxygen availability. Has a nitric oxide dioxygenase (NOD) activity and is most probably involved in cell-mediated and oxygen-dependent nitric oxide consumption. By scavenging this second messenger may regulate several biological processes including endothelium-mediated vasodilation and vascular tone. Under normoxic conditions functions as a nitric oxide dioxygenase (NOD) but under hypoxic conditions the globin may switch its function to that of a nitrite (NO2) reductase (NiR), generating nitric oxide. Could also have peroxidase and superoxide dismutase activities, detoxifying reactive oxygen species and protecting cells against oxidative stress. Also binds dioxygen with low affinity and could function as an oxygen sensor but has probably no function as a respiratory oxygen carrier. The sequence is that of Cytoglobin from Mus musculus (Mouse).